The chain runs to 1373 residues: DNA-directed RNA polymerase subunit beta (1373 aa).

The protein belongs to the RNA polymerase beta chain family. In terms of assembly, the RNAP catalytic core consists of 2 alpha, 1 beta, 1 beta' and 1 omega subunit. When a sigma factor is associated with the core the holoenzyme is formed, which can initiate transcription.

It carries out the reaction RNA(n) + a ribonucleoside 5'-triphosphate = RNA(n+1) + diphosphate. Functionally, DNA-dependent RNA polymerase catalyzes the transcription of DNA into RNA using the four ribonucleoside triphosphates as substrates. This Rickettsia massiliae (strain Mtu5) protein is DNA-directed RNA polymerase subunit beta.